Consider the following 378-residue polypeptide: Mitogen-activated protein kinase mpkC (378 aa).

The Protein kinase domain maps to 20 to 300; the sequence is YVNPQPIGMG…AQDALRYPYL (281 aa). ATP-binding positions include 26-34 and Lys-49; that span reads IGMGSFGLV. Asp-141 (proton acceptor) is an active-site residue. The residue at position 171 (Thr-171) is a Phosphothreonine. Positions 171-173 match the TXY motif; that stretch reads TGY. Phosphotyrosine is present on Tyr-173.

Belongs to the protein kinase superfamily. Ser/Thr protein kinase family. MAP kinase subfamily. HOG1 sub-subfamily. In terms of assembly, interacts with sakA upon osmotic and cell wall stresses. Requires Mg(2+) as cofactor. Dually phosphorylated on Thr-171 and Tyr-173, which activates the enzyme.

The protein localises to the cytoplasm. It localises to the nucleus. The catalysed reaction is L-seryl-[protein] + ATP = O-phospho-L-seryl-[protein] + ADP + H(+). It carries out the reaction L-threonyl-[protein] + ATP = O-phospho-L-threonyl-[protein] + ADP + H(+). Its activity is regulated as follows. Activated by tyrosine and threonine phosphorylation. Its function is as follows. Mitogen-activated protein kinase; part of an osmotic and general signal pathways involved in regulation of the response to the cell wall damage, oxidative stress, drug resistance, and establishment of infection. Required for growth on media where sorbitol or mannitol is the sole carbon source. With sakA, plays a redundant or cooperative role in the conidial stress resistance. Also plays a supportive role in osmotic stress adaptation when sakA is deficient. Involved in paradoxical growth, the cell wall integrity (CWI) pathway and biofilm formation. Acts by modulating sakA activity upon exposure to several types o stresses and during cell wall biosynthesis. Also collaborates with sakA to allow ful virulence in a neutropenic murine model of invasive pulmonary aspergillosis. MpkC and sakA have both independent and collaborative functions during the transcriptional response to transient osmotic stress, and mpkC plays a major role in the modulation of the response to DNA metabolism while activating mitochondrial functions and cation transport. The chain is Mitogen-activated protein kinase mpkC (mpkC) from Aspergillus fumigatus (strain ATCC MYA-4609 / CBS 101355 / FGSC A1100 / Af293) (Neosartorya fumigata).